Here is a 247-residue protein sequence, read N- to C-terminus: Caffeoyl-CoA O-methyltransferase 2 (247 aa).

Residue lysine 21 participates in substrate binding. S-adenosyl-L-methionine is bound by residues threonine 63, glutamate 85, glycine 87–valine 88, serine 93, aspartate 111, and alanine 140. Aspartate 163 serves as a coordination point for substrate. Aspartate 163 provides a ligand contact to a divalent metal cation. Aspartate 165 serves as a coordination point for S-adenosyl-L-methionine. A divalent metal cation contacts are provided by aspartate 189 and asparagine 190. Asparagine 194 is a binding site for substrate.

It belongs to the class I-like SAM-binding methyltransferase superfamily. Cation-dependent O-methyltransferase family. CCoAMT subfamily. It depends on a divalent metal cation as a cofactor.

It carries out the reaction (E)-caffeoyl-CoA + S-adenosyl-L-methionine = (E)-feruloyl-CoA + S-adenosyl-L-homocysteine + H(+). It participates in aromatic compound metabolism; phenylpropanoid biosynthesis. Functionally, methylates caffeoyl-CoA to feruloyl-CoA and 5-hydroxyferuloyl-CoA to sinapoyl-CoA. Plays a role in the synthesis of feruloylated polysaccharides. Involved in the reinforcement of the plant cell wall. Also involved in the responding to wounding or pathogen challenge by the increased formation of cell wall-bound ferulic acid polymers. This chain is Caffeoyl-CoA O-methyltransferase 2 (CCOAOMT2), found in Populus trichocarpa (Western balsam poplar).